The sequence spans 351 residues: Tetraacyldisaccharide 4'-kinase (351 aa).

47 to 54 contributes to the ATP binding site; it reads KAGGTGKT.

It belongs to the LpxK family.

The catalysed reaction is a lipid A disaccharide + ATP = a lipid IVA + ADP + H(+). It participates in glycolipid biosynthesis; lipid IV(A) biosynthesis; lipid IV(A) from (3R)-3-hydroxytetradecanoyl-[acyl-carrier-protein] and UDP-N-acetyl-alpha-D-glucosamine: step 6/6. Transfers the gamma-phosphate of ATP to the 4'-position of a tetraacyldisaccharide 1-phosphate intermediate (termed DS-1-P) to form tetraacyldisaccharide 1,4'-bis-phosphate (lipid IVA). The protein is Tetraacyldisaccharide 4'-kinase of Cytophaga hutchinsonii (strain ATCC 33406 / DSM 1761 / CIP 103989 / NBRC 15051 / NCIMB 9469 / D465).